We begin with the raw amino-acid sequence, 427 residues long: Glutamate-1-semialdehyde 2,1-aminomutase (427 aa).

N6-(pyridoxal phosphate)lysine is present on Lys267.

It belongs to the class-III pyridoxal-phosphate-dependent aminotransferase family. HemL subfamily. As to quaternary structure, homodimer. It depends on pyridoxal 5'-phosphate as a cofactor.

It is found in the cytoplasm. The enzyme catalyses (S)-4-amino-5-oxopentanoate = 5-aminolevulinate. The protein operates within porphyrin-containing compound metabolism; protoporphyrin-IX biosynthesis; 5-aminolevulinate from L-glutamyl-tRNA(Glu): step 2/2. This Desulfosudis oleivorans (strain DSM 6200 / JCM 39069 / Hxd3) (Desulfococcus oleovorans) protein is Glutamate-1-semialdehyde 2,1-aminomutase.